A 723-amino-acid polypeptide reads, in one-letter code: MSEKQVFSTEWAGKTLSVEVGQLAKQASGAALIRYGDTVVLTAAVGSKKPRPGDFFPLTVNYEEKMYSVGKVPGGFLKREGRPSDRATLTARLIDRPIRPLFAEGFRNEVQITSTVFSVDQDCSPEMAAMLGSSVALVISDIPFEGPIAGVDVGRIDGKYVINPTIEQAEKSDISLTVAGTYDAINMVEAGAKEVSEEAMLEAIMFGHEEIKRLCEFQQQIIAAVGKEKREIELFVSDPELEAEVKAASEGKMKVAIKTEEKKAREAAIEEVKEEILESYKAKELENETEILSEVAHILEMIEKDEMRRLISQDKIRPDGRKVNEIRPLSSEVGMLPRVHGSGLFTRGQTQALSVCTLAPLREHQIIDGLGTEEYKRFMHHYNFPQFSVGETGPRRAPGRREIGHGALGERALQYVIPSEEDFPYTIRLVSEVLESNGSSSQASICGSTLAMLDAGVPIKAPVAGIAMGLVKLGDDYTILSDIQGMEDHFGDMDFKVAGTKDGITALQMDIKIDGLSRQILDEALTQAKEGRLHILEHLTSTISAPREELSAYAPKIITLNIKPEKIKDVIGPGGKQINAIIEETGVKIDIEQDGTVYIASQDQAMNRKAIAIIEDIVREVEVGEVYTGKVRRIEKFGAFVELFKGTDGLVHISELAHERVGKVEDILKLGDEVTVKVIEVDHQGRVNLSRKALLEKKEQPEGDKKPQAEKKFYPKTKKPESK.

Residues aspartate 488 and aspartate 494 each coordinate Mg(2+). In terms of domain architecture, KH spans proline 555–isoleucine 614. An S1 motif domain is found at glycine 624 to lysine 692. The interval lysine 692–lysine 723 is disordered. Basic and acidic residues predominate over residues alanine 693 to lysine 723.

The protein belongs to the polyribonucleotide nucleotidyltransferase family. It depends on Mg(2+) as a cofactor.

Its subcellular location is the cytoplasm. It carries out the reaction RNA(n+1) + phosphate = RNA(n) + a ribonucleoside 5'-diphosphate. Its function is as follows. Involved in mRNA degradation. Catalyzes the phosphorolysis of single-stranded polyribonucleotides processively in the 3'- to 5'-direction. This is Polyribonucleotide nucleotidyltransferase from Listeria welshimeri serovar 6b (strain ATCC 35897 / DSM 20650 / CCUG 15529 / CIP 8149 / NCTC 11857 / SLCC 5334 / V8).